We begin with the raw amino-acid sequence, 400 residues long: NAD-dependent protein deacetylase sirtuin-7 (400 aa).

Positions 1–27 are disordered; sequence MAAGGLSRSERKAAERVRRLREEQQRE. Over residues 8–27 the composition is skewed to basic and acidic residues; the sequence is RSERKAAERVRRLREEQQRE. Residues 82–329 enclose the Deacetylase sirtuin-type domain; sequence PEELRGKVRE…RLLMAELGLE (248 aa). NAD(+) contacts are provided by residues 107–126 and 167–170; these read GAGI…NGVW and QNCD. The active-site Proton acceptor is the His-187. 4 residues coordinate Zn(2+): Cys-195, Cys-198, Cys-225, and Cys-228. Residues 268–270, 297–299, and Cys-315 each bind NAD(+); these read GSS and NLQ. The tract at residues 354–380 is disordered; the sequence is SHSRKSLCRSREEAPPGDRGAPLSSAP. At Arg-388 the chain carries Asymmetric dimethylarginine; alternate. Residue Arg-388 is modified to Omega-N-methylarginine; alternate.

Belongs to the sirtuin family. Class IV subfamily. As to quaternary structure, interacts with UBTF and the RNA polymerase I complex. Interacts with components of the B-WICH complex, such as MYBBP1A, SMARCA5/SNF2H and BAZ1B/WSTF. Interacts with ELK4, leading to stabilization at target promoters for H3K18Ac deacetylation. Interacts with histone H2A and/or histone H2B. Interacts with DNMT1. Interacts with SIRT1. It depends on Zn(2+) as a cofactor. Post-translationally, phosphorylated during mitosis. Methylation at Arg-388 by PRMT6 inhibits the H3K18Ac histone deacetylase activity, promoting mitochondria biogenesis and maintaining mitochondria respiration. In terms of processing, ubiquitinated via 'Lys-63'-linked ubiquitin chains. Deubiquitinated by USP7, inhibiting the H3K18Ac histone deacetylase activity and regulating gluconeogenesis. Ubiquitinated by E3 ubiquitin-protein ligase complex containing FBXO7; leading to proteasomal degradation.

It localises to the nucleus. Its subcellular location is the nucleolus. The protein resides in the nucleoplasm. The protein localises to the chromosome. It is found in the cytoplasm. It catalyses the reaction N(6)-acetyl-L-lysyl-[protein] + NAD(+) + H2O = 2''-O-acetyl-ADP-D-ribose + nicotinamide + L-lysyl-[protein]. The enzyme catalyses N(6)-glutaryl-L-lysyl-[protein] + NAD(+) + H2O = 2''-O-glutaryl-ADP-D-ribose + nicotinamide + L-lysyl-[protein]. It carries out the reaction N(6)-succinyl-L-lysyl-[protein] + NAD(+) + H2O = 2''-O-succinyl-ADP-D-ribose + nicotinamide + L-lysyl-[protein]. The catalysed reaction is N(6)-propanoyl-L-lysyl-[protein] + NAD(+) + H2O = 3''-O-propanoyl-ADP-D-ribose + nicotinamide + L-lysyl-[protein]. It catalyses the reaction N(6)-decanoyl-L-lysyl-[protein] + NAD(+) + H2O = 2''-O-decanoyl-ADP-D-ribose + nicotinamide + L-lysyl-[protein]. NAD-dependent protein-lysine deacetylase and deacylase activities are activated by nucleic acids. Histone deacetylase activity is activated by DNA and nucleosomes. Protein-lysine deacylase activity is activated by RNA. H3K18Ac histone deacetylase activity is inhibited by methylation at Arg-388. H3K18Ac histone deacetylase activity is inhibited by deubiquitination by USP7. Its function is as follows. NAD-dependent protein-lysine deacylase that can act both as a deacetylase or deacylase (desuccinylase, depropionylase, deglutarylase and dedecanoylase), depending on the context. Specifically mediates deacetylation of histone H3 at 'Lys-18' (H3K18Ac). In contrast to other histone deacetylases, displays strong preference for a specific histone mark, H3K18Ac, directly linked to control of gene expression. H3K18Ac is mainly present around the transcription start site of genes and has been linked to activation of nuclear hormone receptors; SIRT7 thereby acts as a transcription repressor. Moreover, H3K18 hypoacetylation has been reported as a marker of malignancy in various cancers and seems to maintain the transformed phenotype of cancer cells. Also able to mediate deacetylation of histone H3 at 'Lys-36' (H3K36Ac) in the context of nucleosomes. Also mediates deacetylation of non-histone proteins, such as ATM, CDK9, DDX21, DDB1, FBL, FKBP5/FKBP51, GABPB1, RAN, RRP9/U3-55K and POLR1E/PAF53. Enriched in nucleolus where it stimulates transcription activity of the RNA polymerase I complex. Acts by mediating the deacetylation of the RNA polymerase I subunit POLR1E/PAF53, thereby promoting the association of RNA polymerase I with the rDNA promoter region and coding region. In response to metabolic stress, SIRT7 is released from nucleoli leading to hyperacetylation of POLR1E/PAF53 and decreased RNA polymerase I transcription. Required to restore the transcription of ribosomal RNA (rRNA) at the exit from mitosis. Promotes pre-ribosomal RNA (pre-rRNA) cleavage at the 5'-terminal processing site by mediating deacetylation of RRP9/U3-55K, a core subunit of the U3 snoRNP complex. Mediates 'Lys-37' deacetylation of Ran, thereby regulating the nuclear export of NF-kappa-B subunit RELA/p65. Acts as a regulator of DNA damage repair by mediating deacetylation of ATM during the late stages of DNA damage response, promoting ATM dephosphorylation and deactivation. Suppresses the activity of the DCX (DDB1-CUL4-X-box) E3 ubiquitin-protein ligase complexes by mediating deacetylation of DDB1, which prevents the interaction between DDB1 and CUL4 (CUL4A or CUL4B). Activates RNA polymerase II transcription by mediating deacetylation of CDK9, thereby promoting 'Ser-2' phosphorylation of the C-terminal domain (CTD) of RNA polymerase II. Deacetylates FBL, promoting histone-glutamine methyltransferase activity of FBL. Acts as a regulator of mitochondrial function by catalyzing deacetylation of GABPB1. Regulates Akt/AKT1 activity by mediating deacetylation of FKBP5/FKBP51. Required to prevent R-loop-associated DNA damage and transcription-associated genomic instability by mediating deacetylation and subsequent activation of DDX21, thereby overcoming R-loop-mediated stalling of RNA polymerases. In addition to protein deacetylase activity, also acts as a protein-lysine deacylase. Acts as a protein depropionylase by mediating depropionylation of Osterix (SP7), thereby regulating bone formation by osteoblasts. Acts as a histone deglutarylase by mediating deglutarylation of histone H4 on 'Lys-91' (H4K91glu); a mark that destabilizes nucleosomes by promoting dissociation of the H2A-H2B dimers from nucleosomes. Acts as a histone desuccinylase: in response to DNA damage, recruited to DNA double-strand breaks (DSBs) and catalyzes desuccinylation of histone H3 on 'Lys-122' (H3K122succ), thereby promoting chromatin condensation and DSB repair. Also promotes DSB repair by promoting H3K18Ac deacetylation, regulating non-homologous end joining (NHEJ). Along with its role in DNA repair, required for chromosome synapsis during prophase I of female meiosis by catalyzing H3K18Ac deacetylation. Involved in transcriptional repression of LINE-1 retrotransposon via H3K18Ac deacetylation, and promotes their association with the nuclear lamina. Required to stabilize ribosomal DNA (rDNA) heterochromatin and prevent cellular senescence induced by rDNA instability. Acts as a negative regulator of SIRT1 by preventing autodeacetylation of SIRT1, restricting SIRT1 deacetylase activity. In Homo sapiens (Human), this protein is NAD-dependent protein deacetylase sirtuin-7.